The following is a 265-amino-acid chain: MPQWFTSKSDPEDTRIQETLKSSCVLPRHIGIIMDGNGRWAKIKGKSRIAGHVAGVESVRDVVEASSQLGIENLTLFTFSIENWKRPKPEISALMKLLIKVLRKEAVKLLENDIRLEVIGDMEMIPDDVRKTLDETIELTRKNRGMAMTIALSYSGKWDITQACRHIALQVKQGLLDPETIDENLFASYLSTASMPDPDLLIRTSGEYRISNFMLWQNAYSEIIFSNTLWPDFRRNELYEAIREFQKRERRFGKTSEQLKTNEVE.

The active site involves aspartate 35. Mg(2+) is bound at residue aspartate 35. Substrate is bound by residues 36 to 39 (GNGR), tryptophan 40, arginine 48, histidine 52, and 80 to 82 (SIE). The active-site Proton acceptor is the asparagine 83. Substrate is bound by residues tryptophan 84, arginine 86, arginine 203, and 209-211 (RIS). Residue glutamate 222 participates in Mg(2+) binding.

The protein belongs to the UPP synthase family. As to quaternary structure, homodimer. It depends on Mg(2+) as a cofactor.

Its function is as follows. Catalyzes the condensation of isopentenyl diphosphate (IPP) with allylic pyrophosphates generating different type of terpenoids. In Chlorobaculum tepidum (strain ATCC 49652 / DSM 12025 / NBRC 103806 / TLS) (Chlorobium tepidum), this protein is Isoprenyl transferase.